We begin with the raw amino-acid sequence, 399 residues long: Inositol polyphosphate 1-phosphatase (399 aa).

Asp54 is a binding site for Li(+). Glu79 lines the Mg(2+) pocket. Glu80 is a Li(+) binding site. Mg(2+) is bound by residues Asp153 and Ile155. Asp156, Ser157, Thr158, Ser267, Lys269, Gly289, Ala290, Lys293, and Thr311 together coordinate 1D-myo-inositol 1,4-bisphosphate. Position 316 (Asp316) interacts with Mg(2+). Ser317 bears the Phosphoserine mark.

This sequence belongs to the inositol monophosphatase superfamily. As to quaternary structure, monomer. Mg(2+) serves as cofactor. As to expression, ubiquitously expressed, with highest levels in pancreas and kidney.

The catalysed reaction is 1D-myo-inositol 1,4-bisphosphate + H2O = 1D-myo-inositol 4-phosphate + phosphate. It catalyses the reaction 1D-myo-inositol 1,3,4-trisphosphate + H2O = 1D-myo-inositol 3,4-bisphosphate + phosphate. The protein operates within signal transduction; phosphatidylinositol signaling pathway. With respect to regulation, inhibited by Li(+). Mg(2+)-dependent phosphatase that catalyzes the hydrolysis of the 1-position phosphate from inositol 1,4-bisphosphate and inositol 1,3,4-trisphosphate and participates in inositol phosphate metabolism. This chain is Inositol polyphosphate 1-phosphatase, found in Homo sapiens (Human).